Here is a 339-residue protein sequence, read N- to C-terminus: D-alanine--D-alanine ligase (339 aa).

Residues 115–327 (KHIFRSLGID…FNELVKIIIE (213 aa)) form the ATP-grasp domain. 142–211 (KIDYPYVLKP…EEYIPGIELH (70 aa)) contacts ATP. Residues Asp-279, Glu-293, and Asn-295 each coordinate Mg(2+).

Belongs to the D-alanine--D-alanine ligase family. Mg(2+) is required as a cofactor. It depends on Mn(2+) as a cofactor.

The protein localises to the cytoplasm. The enzyme catalyses 2 D-alanine + ATP = D-alanyl-D-alanine + ADP + phosphate + H(+). It participates in cell wall biogenesis; peptidoglycan biosynthesis. Its function is as follows. Cell wall formation. The chain is D-alanine--D-alanine ligase from Wolbachia sp. subsp. Brugia malayi (strain TRS).